Reading from the N-terminus, the 344-residue chain is Dihydroorotate dehydrogenase (quinone) (344 aa).

Residues 65–69 (AGLDK) and Thr89 contribute to the FMN site. Lys69 serves as a coordination point for substrate. 114–118 (NRMGF) lines the substrate pocket. Asn145 and Asn178 together coordinate FMN. Asn178 is a binding site for substrate. Ser181 functions as the Nucleophile in the catalytic mechanism. Residue Asn183 coordinates substrate. Lys223 and Thr251 together coordinate FMN. Substrate is bound at residue 252 to 253 (NT). FMN-binding positions include Gly274, Gly303, and 324–325 (YS).

Belongs to the dihydroorotate dehydrogenase family. Type 2 subfamily. Monomer. The cofactor is FMN.

The protein resides in the cell membrane. The enzyme catalyses (S)-dihydroorotate + a quinone = orotate + a quinol. Its pathway is pyrimidine metabolism; UMP biosynthesis via de novo pathway; orotate from (S)-dihydroorotate (quinone route): step 1/1. Functionally, catalyzes the conversion of dihydroorotate to orotate with quinone as electron acceptor. This chain is Dihydroorotate dehydrogenase (quinone), found in Cupriavidus necator (strain ATCC 17699 / DSM 428 / KCTC 22496 / NCIMB 10442 / H16 / Stanier 337) (Ralstonia eutropha).